Reading from the N-terminus, the 128-residue chain is Large ribosomal subunit protein bL12 (128 aa).

The protein belongs to the bacterial ribosomal protein bL12 family. Homodimer. Part of the ribosomal stalk of the 50S ribosomal subunit. Forms a multimeric L10(L12)X complex, where L10 forms an elongated spine to which 2 to 4 L12 dimers bind in a sequential fashion. Binds GTP-bound translation factors.

Forms part of the ribosomal stalk which helps the ribosome interact with GTP-bound translation factors. Is thus essential for accurate translation. In Thermotoga petrophila (strain ATCC BAA-488 / DSM 13995 / JCM 10881 / RKU-1), this protein is Large ribosomal subunit protein bL12.